We begin with the raw amino-acid sequence, 399 residues long: Acetate kinase (399 aa).

Asn10 serves as a coordination point for Mg(2+). Lys17 lines the ATP pocket. Arg91 contributes to the substrate binding site. The active-site Proton donor/acceptor is the Asp150. Residues 210–214 (HLGNG), 285–287 (DFR), and 333–337 (GIGEN) contribute to the ATP site. Glu387 is a Mg(2+) binding site.

This sequence belongs to the acetokinase family. As to quaternary structure, homodimer. Mg(2+) is required as a cofactor. Requires Mn(2+) as cofactor.

Its subcellular location is the cytoplasm. The catalysed reaction is acetate + ATP = acetyl phosphate + ADP. Its pathway is metabolic intermediate biosynthesis; acetyl-CoA biosynthesis; acetyl-CoA from acetate: step 1/2. In terms of biological role, catalyzes the formation of acetyl phosphate from acetate and ATP. Can also catalyze the reverse reaction. This is Acetate kinase from Wigglesworthia glossinidia brevipalpis.